Here is a 622-residue protein sequence, read N- to C-terminus: Elongation factor 4 (622 aa).

The tr-type G domain occupies 17–201 (ALIRNFCIIA…KVVAEVPAPV (185 aa)). GTP-binding positions include 29–34 (DHGKST) and 148–151 (NKID).

The protein belongs to the TRAFAC class translation factor GTPase superfamily. Classic translation factor GTPase family. LepA subfamily.

Its subcellular location is the cell membrane. It carries out the reaction GTP + H2O = GDP + phosphate + H(+). Functionally, required for accurate and efficient protein synthesis under certain stress conditions. May act as a fidelity factor of the translation reaction, by catalyzing a one-codon backward translocation of tRNAs on improperly translocated ribosomes. Back-translocation proceeds from a post-translocation (POST) complex to a pre-translocation (PRE) complex, thus giving elongation factor G a second chance to translocate the tRNAs correctly. Binds to ribosomes in a GTP-dependent manner. This chain is Elongation factor 4, found in Streptomyces avermitilis (strain ATCC 31267 / DSM 46492 / JCM 5070 / NBRC 14893 / NCIMB 12804 / NRRL 8165 / MA-4680).